Here is a 943-residue protein sequence, read N- to C-terminus: Leucine--tRNA ligase (943 aa).

Positions 36-46 (PYPSGSMHVGH) match the 'HIGH' region motif. The 'KMSKS' region signature appears at 623 to 627 (KMSSS). Residues 910 to 943 (ASEVVIHTDPEEAPGPEDRKAGARPLRPGIWLEE) are disordered. Basic and acidic residues predominate over residues 915-930 (IHTDPEEAPGPEDRKA).

This sequence belongs to the class-I aminoacyl-tRNA synthetase family.

The protein resides in the cytoplasm. It catalyses the reaction tRNA(Leu) + L-leucine + ATP = L-leucyl-tRNA(Leu) + AMP + diphosphate. In Methanopyrus kandleri (strain AV19 / DSM 6324 / JCM 9639 / NBRC 100938), this protein is Leucine--tRNA ligase.